We begin with the raw amino-acid sequence, 291 residues long: Pantothenate synthetase (291 aa).

Residue 30–37 participates in ATP binding; that stretch reads MGALHAGH. H37 (proton donor) is an active-site residue. Q61 contributes to the (R)-pantoate binding site. Beta-alanine is bound at residue Q61. Residue 147-150 coordinates ATP; it reads GQKD. Q153 is a (R)-pantoate binding site. ATP contacts are provided by residues V176 and 184 to 187; that span reads LSSR.

This sequence belongs to the pantothenate synthetase family. In terms of assembly, homodimer.

Its subcellular location is the cytoplasm. The enzyme catalyses (R)-pantoate + beta-alanine + ATP = (R)-pantothenate + AMP + diphosphate + H(+). The protein operates within cofactor biosynthesis; (R)-pantothenate biosynthesis; (R)-pantothenate from (R)-pantoate and beta-alanine: step 1/1. In terms of biological role, catalyzes the condensation of pantoate with beta-alanine in an ATP-dependent reaction via a pantoyl-adenylate intermediate. The protein is Pantothenate synthetase of Koribacter versatilis (strain Ellin345).